Consider the following 330-residue polypeptide: Protein ANTHESIS POMOTING FACTOR 1 (330 aa).

WD repeat units follow at residues 22–61 (DFGGKIHSVGFHRTDDLLVTSSEDDSLRLFDIANAKQLKI), 112–151 (GHKDRVVSLCMSPINDSFMSGSLDRSVRLWDLRVNACQGI), 153–191 (HLRGRPAVAYDQQGLVFAIAMEGGAVKLFDSRCYDKGPF), 198–237 (GDTAEVNDIKFSNDGKSMLLTTTNNNIYVLDAYRGEKKCG), 242–281 (PSQGTPIEATFTPDGKYVLSGSGDGTLHAWNIENPSEVAR), and 284–323 (NNIGVVSCLKWAPRRAMFVAASTVLTFWIPNDGESPAPAD).

It belongs to the WD repeat SWD2 family. Expressed in the shoot apical meristem (SAM), embryos, seedlings, cotyledons, leaves primordia, young leaves and roots.

The protein localises to the nucleus. Functionally, component of a chromatin regulatory complex involved in regulating chromatin structure in the nucleus. Promotes flowering under long days (LD) via the regulation of bolting. The sequence is that of Protein ANTHESIS POMOTING FACTOR 1 from Arabidopsis thaliana (Mouse-ear cress).